Here is a 361-residue protein sequence, read N- to C-terminus: Rhomboid domain-containing protein 2 (361 aa).

A run of 5 helical transmembrane segments spans residues Ser-19–Leu-39, Leu-63–Ile-83, Cys-100–Val-120, Phe-158–Ile-178, and Ser-182–Tyr-202. Disordered stretches follow at residues Pro-265 to His-287 and Pro-318 to Pro-361. Polar residues-rich tracts occupy residues Tyr-267–Ser-276 and Pro-318–Gln-328.

Belongs to the peptidase S54 family. Might form homotrimers; these trimers are only formed in retina. In terms of tissue distribution, widely expressed, including in retina and brain (at protein level), as well as in kidney, testis and ovary. Expressed in all layers of the retina, including inner segments of photoreceptor cells and ganglion cells (at protein level).

The protein resides in the golgi apparatus. It localises to the cis-Golgi network membrane. This chain is Rhomboid domain-containing protein 2 (Rhbdd2), found in Mus musculus (Mouse).